Consider the following 145-residue polypeptide: Transcription antitermination protein NusB (145 aa).

It belongs to the NusB family.

In terms of biological role, involved in transcription antitermination. Required for transcription of ribosomal RNA (rRNA) genes. Binds specifically to the boxA antiterminator sequence of the ribosomal RNA (rrn) operons. The sequence is that of Transcription antitermination protein NusB from Psychromonas ingrahamii (strain DSM 17664 / CCUG 51855 / 37).